We begin with the raw amino-acid sequence, 156 residues long: Small ribosomal subunit protein uS7 (156 aa).

Belongs to the universal ribosomal protein uS7 family. Part of the 30S ribosomal subunit. Contacts proteins S9 and S11.

In terms of biological role, one of the primary rRNA binding proteins, it binds directly to 16S rRNA where it nucleates assembly of the head domain of the 30S subunit. Is located at the subunit interface close to the decoding center, probably blocks exit of the E-site tRNA. The sequence is that of Small ribosomal subunit protein uS7 from Campylobacter curvus (strain 525.92).